We begin with the raw amino-acid sequence, 350 residues long: Beta-ketoacyl-[acyl-carrier-protein] synthase III (350 aa).

Residues Cys120 and His256 contribute to the active site. The tract at residues 257-261 (QANVR) is ACP-binding. Residue Asn286 is part of the active site.

It belongs to the thiolase-like superfamily. FabH family. In terms of assembly, homodimer.

It is found in the cytoplasm. It catalyses the reaction malonyl-[ACP] + acetyl-CoA + H(+) = 3-oxobutanoyl-[ACP] + CO2 + CoA. It functions in the pathway lipid metabolism; fatty acid biosynthesis. Its function is as follows. Catalyzes the condensation reaction of fatty acid synthesis by the addition to an acyl acceptor of two carbons from malonyl-ACP. Catalyzes the first condensation reaction which initiates fatty acid synthesis and may therefore play a role in governing the total rate of fatty acid production. Possesses both acetoacetyl-ACP synthase and acetyl transacylase activities. Its substrate specificity determines the biosynthesis of branched-chain and/or straight-chain of fatty acids. In Deinococcus deserti (strain DSM 17065 / CIP 109153 / LMG 22923 / VCD115), this protein is Beta-ketoacyl-[acyl-carrier-protein] synthase III.